The chain runs to 153 residues: Alpha-amylase type B isozyme (153 aa).

Residues Lys-19, 25-27 (GWW), His-38, Gln-44, Lys-123, and Trp-150 contribute to the substrate site.

This sequence belongs to the glycosyl hydrolase 13 family. In terms of assembly, monomer. Ca(2+) serves as cofactor.

The catalysed reaction is Endohydrolysis of (1-&gt;4)-alpha-D-glucosidic linkages in polysaccharides containing three or more (1-&gt;4)-alpha-linked D-glucose units.. This Hordeum vulgare (Barley) protein is Alpha-amylase type B isozyme (AMY1.4).